The chain runs to 757 residues: Elongation factor G, mitochondrial (757 aa).

The N-terminal 39 residues, 1-39, are a transit peptide targeting the mitochondrion; that stretch reads MLLVPRVPVVMQGKCGLLKISRPLQGSLSRGFHFSRAHR. Residues 65–346 form the tr-type G domain; that stretch reads QKLRNIGISA…AIVDYLPNPS (282 aa). GTP contacts are provided by residues 74–81, 145–149, and 199–202; these read AHIDSGKT, DTPGH, and NKMD.

It belongs to the TRAFAC class translation factor GTPase superfamily. Classic translation factor GTPase family. EF-G/EF-2 subfamily.

It is found in the mitochondrion. It participates in protein biosynthesis; polypeptide chain elongation. In terms of biological role, mitochondrial GTPase that catalyzes the GTP-dependent ribosomal translocation step during translation elongation. During this step, the ribosome changes from the pre-translocational (PRE) to the post-translocational (POST) state as the newly formed A-site-bound peptidyl-tRNA and P-site-bound deacylated tRNA move to the P and E sites, respectively. Catalyzes the coordinated movement of the two tRNA molecules, the mRNA and conformational changes in the ribosome. In Candida glabrata (strain ATCC 2001 / BCRC 20586 / JCM 3761 / NBRC 0622 / NRRL Y-65 / CBS 138) (Yeast), this protein is Elongation factor G, mitochondrial.